The sequence spans 337 residues: Transcription initiation factor IIB (337 aa).

The segment at 37–68 (YTVECPECGSRALVRDYERAELVCSECGLVID) adopts a TFIIB-type zinc-finger fold. Positions 41, 44, 60, and 63 each coordinate Zn(2+). Repeat copies occupy residues 154–237 (SELD…SREL) and 248–329 (DYIP…ELAE).

Belongs to the TFIIB family.

Stabilizes TBP binding to an archaeal box-A promoter. Also responsible for recruiting RNA polymerase II to the pre-initiation complex (DNA-TBP-TFIIB). The protein is Transcription initiation factor IIB of Methanothrix thermoacetophila (strain DSM 6194 / JCM 14653 / NBRC 101360 / PT) (Methanosaeta thermophila).